Here is a 78-residue protein sequence, read N- to C-terminus: Acyl carrier protein AcpP (78 aa).

The 76-residue stretch at 2 to 77 (SDIAERVKKI…DAVKFIEKAQ (76 aa)) folds into the Carrier domain. Ser-37 carries the post-translational modification O-(pantetheine 4'-phosphoryl)serine.

This sequence belongs to the acyl carrier protein (ACP) family. In terms of processing, 4'-phosphopantetheine is transferred from CoA to a specific serine of apo-ACP by AcpS. This modification is essential for activity because fatty acids are bound in thioester linkage to the sulfhydryl of the prosthetic group.

Its subcellular location is the cytoplasm. It participates in lipid metabolism; fatty acid biosynthesis. Its function is as follows. Carrier of the growing fatty acid chain in fatty acid biosynthesis. The chain is Acyl carrier protein AcpP from Agrobacterium fabrum (strain C58 / ATCC 33970) (Agrobacterium tumefaciens (strain C58)).